The sequence spans 366 residues: tRNA-queuosine alpha-mannosyltransferase (366 aa).

It belongs to the glycosyltransferase group 1 family. Glycosyltransferase 4 subfamily.

It is found in the cytoplasm. The protein resides in the nucleus. It carries out the reaction queuosine(34) in tRNA(Asp) + GDP-alpha-D-mannose = O-4''-alpha-D-mannosylqueuosine(34) in tRNA(Asp) + GDP + H(+). In terms of biological role, glycosyltransferase that specifically catalyzes mannosylation of cytoplasmic tRNA(Asp) modified with queuosine at position 34 (queuosine(34)). Mannosylates the cyclopentene moiety of queuosine(34) in tRNA(Asp) to form mannosyl-queuosine(34). Mannosylation of queuosine(34) in tRNA(Asp) is required to slow-down elongation at cognate codons, GAC and GAU, thereby regulating protein translation. This chain is tRNA-queuosine alpha-mannosyltransferase (GTDC1), found in Bos taurus (Bovine).